The primary structure comprises 173 residues: Lectin BRA-2 (173 aa).

A glycan (N-linked (GlcNAc...) asparagine) is linked at asparagine 39. Cystine bridges form between cysteine 47–cysteine 61, cysteine 78–cysteine 168, and cysteine 144–cysteine 160. Residues 51 to 170 (PNGWVTSENK…NDRYNFVCEI (120 aa)) enclose the C-type lectin domain.

As to quaternary structure, homohexamer; disulfide-linked. As to expression, coelemic fluid.

In terms of biological role, sugar-binding protein which recognizes specific carbohydrate structures and agglutinates a variety of animal cells by binding to cell-surface glycoproteins and glycolipids. Calcium-dependent lectin. Invertebrate lectins may be involved in defense functions. In Megabalanus rosa (Acorn barnacle), this protein is Lectin BRA-2.